The primary structure comprises 377 residues: UPF0754 membrane protein lmo2224 (377 aa).

Transmembrane regions (helical) follow at residues 1-21 (MSVL…GAMT) and 357-377 (YLGG…AMWI).

The protein belongs to the UPF0754 family.

The protein localises to the cell membrane. The sequence is that of UPF0754 membrane protein lmo2224 from Listeria monocytogenes serovar 1/2a (strain ATCC BAA-679 / EGD-e).